Here is a 512-residue protein sequence, read N- to C-terminus: MEELQGYLKKDRSPQQHFLYPLLLQEYIYTLAHDDSLNGSIFYEPIEFIGYDNKFSLVLVKRLIIRMYQQNFLIYLVNDSNQNRFGGHTNSFYSHFFYSQMVSKGFSVIVEIPFSLRLVSSSEEKEIPKSQNLGSIHSIFPFLEDKLSHLNNVSDILIPHPIHFEILVQILQCWIQDVPSLHLLRFFLHKYQNLNKTIQSNKTIYVFSKENKRLFWFLYNSYVSECEFLLVFFHKQSCYLRSTSSGTFLERSHFYGKMEHIIIVCCNNFHKTLWPIKDPLIHYVRYQGKAILASRGTHLLMKKWRYYFVNFWQYYFHFWSQPYRMHINSLLNYSFYFMGYLLRVLINPYAVKNQMLENSFLIDTVIKKFDTIIPIIPLIGSLSKAKFCTFSGHPISKPIWADLSDFDIIDRFGRICRNLSHYYSGSSKKQSLYRIKYILRLSCARTLARKHKSTARALLQRLGLGFLEEFFTEEEQVLSFIFPKTTLFTLHGSHRERIWSLDIIRINDLVNN.

The protein belongs to the intron maturase 2 family. MatK subfamily.

It localises to the plastid. The protein localises to the chloroplast. Its function is as follows. Usually encoded in the trnK tRNA gene intron. Probably assists in splicing its own and other chloroplast group II introns. This is Maturase K from Lilium longiflorum (Trumpet lily).